The following is a 185-amino-acid chain: Large ribosomal subunit protein uL22 (185 aa).

This sequence belongs to the universal ribosomal protein uL22 family.

The chain is Large ribosomal subunit protein uL22 (RPL17) from Debaryomyces hansenii (strain ATCC 36239 / CBS 767 / BCRC 21394 / JCM 1990 / NBRC 0083 / IGC 2968) (Yeast).